The following is a 272-amino-acid chain: Bis(5'-nucleosyl)-tetraphosphatase, symmetrical (272 aa).

Belongs to the Ap4A hydrolase family.

It carries out the reaction P(1),P(4)-bis(5'-adenosyl) tetraphosphate + H2O = 2 ADP + 2 H(+). In terms of biological role, hydrolyzes diadenosine 5',5'''-P1,P4-tetraphosphate to yield ADP. The chain is Bis(5'-nucleosyl)-tetraphosphatase, symmetrical from Glaesserella parasuis serovar 5 (strain SH0165) (Haemophilus parasuis).